A 512-amino-acid polypeptide reads, in one-letter code: Cytochrome P450 84A4 (512 aa).

The helical transmembrane segment at 7-24 (LIVLVPLLLFLFPHLLLR) threads the bilayer. C447 lines the heme pocket.

The protein belongs to the cytochrome P450 family. The cofactor is heme. In terms of tissue distribution, expressed in seedlings, roots, stems and inflorescence nodes. Low or no expression in leaves, flowers, seeds and lignifying tissue.

It localises to the membrane. In terms of biological role, cytochrome P450 involved in the production of catechol-substituted substrates needed for the arabidopyrones biosynthesis. Converts p-coumaraldehyde into caffealdehyde. The polypeptide is Cytochrome P450 84A4 (CYP84A4) (Arabidopsis thaliana (Mouse-ear cress)).